We begin with the raw amino-acid sequence, 581 residues long: Solute carrier family 15 member 3 (581 aa).

Residues 1–14 (MPAPRAREQPRVPG) show a composition bias toward basic and acidic residues. The tract at residues 1-26 (MPAPRAREQPRVPGERQPLLPRGARG) is disordered. The chain crosses the membrane as a helical span at residues 38–58 (VLLVEMLERAAFFGVTANLVL). N-linked (GlcNAc...) asparagine glycosylation is found at Asn-61 and Asn-66. The next 3 membrane-spanning stretches (helical) occupy residues 76–96 (ALVF…LADV), 103–123 (AVAL…ATAF), and 155–175 (PYCA…ASSV). An N-linked (GlcNAc...) asparagine glycan is attached at Asn-178. Residues 200-220 (NWFYWSINLGAVLSLLVVAFI) traverse the membrane as a helical segment. A glycan (N-linked (GlcNAc...) asparagine) is linked at Asn-223. Helical transmembrane passes span 232–252 (IPVG…PVFI) and 310–330 (FQVL…WMVY). N-linked (GlcNAc...) asparagine glycosylation is present at Asn-356. 2 consecutive transmembrane segments (helical) span residues 369–389 (TIPE…LVPL) and 411–431 (MALG…LEME). N-linked (GlcNAc...) asparagine glycosylation occurs at Asn-439. A run of 3 helical transmembrane segments spans residues 458 to 478 (IWWQ…ASIP), 497 to 517 (GIFF…VALL), and 540 to 560 (LYFF…VWIA).

The protein belongs to the major facilitator superfamily. Proton-dependent oligopeptide transporter (POT/PTR) (TC 2.A.17) family.

The protein localises to the lysosome membrane. It localises to the endosome membrane. The enzyme catalyses glycylglycylglycine(out) + n H(+)(out) = glycylglycylglycine(in) + n H(+)(in). It carries out the reaction carnosine(out) + n H(+)(out) = carnosine(in) + n H(+)(in). The catalysed reaction is L-histidine(out) + n H(+)(out) = L-histidine(in) + n H(+)(in). It catalyses the reaction N-acetyl-D-muramoyl-L-alanyl-D-isoglutamine(out) + n H(+)(out) = N-acetyl-D-muramoyl-L-alanyl-D-isoglutamine(in) + n H(+)(in). Functionally, proton-coupled amino-acid transporter that transports free histidine and certain di- and tripeptides, and is involved in innate immune response. Also able to transport carnosine. Involved in the detection of microbial pathogens by toll-like receptors (TLRs) and NOD-like receptors (NLRs), probably by mediating transport of bacterial peptidoglycans across the endolysosomal membrane: catalyzes the transport of certain bacterial peptidoglycans, such as muramyl dipeptide (MDP), the NOD2 ligand. This Homo sapiens (Human) protein is Solute carrier family 15 member 3.